The sequence spans 293 residues: 3-hydroxybutyryl-CoA dehydrogenase (293 aa).

It belongs to the 3-hydroxyacyl-CoA dehydrogenase family.

It carries out the reaction (3S)-3-hydroxybutanoyl-CoA + NADP(+) = acetoacetyl-CoA + NADPH + H(+). The protein operates within lipid metabolism; butanoate metabolism. The sequence is that of 3-hydroxybutyryl-CoA dehydrogenase (hbdA) from Bradyrhizobium diazoefficiens (strain JCM 10833 / BCRC 13528 / IAM 13628 / NBRC 14792 / USDA 110).